The primary structure comprises 379 residues: 2-methylcitrate synthase (379 aa).

His-187 is a binding site for substrate. His-222 is an active-site residue. 264 to 268 (KVMGF) serves as a coordination point for CoA. Residue His-270 is part of the active site. Arg-279 contributes to the substrate binding site. The active site involves Asp-321. Substrate contacts are provided by Arg-346 and Arg-365.

It belongs to the citrate synthase family. As to quaternary structure, homodimer.

The catalysed reaction is propanoyl-CoA + oxaloacetate + H2O = (2S,3S)-2-methylcitrate + CoA + H(+). It catalyses the reaction oxaloacetate + acetyl-CoA + H2O = citrate + CoA + H(+). Its pathway is organic acid metabolism; propanoate degradation. It functions in the pathway carbohydrate metabolism; tricarboxylic acid cycle; isocitrate from oxaloacetate: step 1/2. In terms of biological role, involved in the catabolism of short chain fatty acids (SCFA) via the tricarboxylic acid (TCA)(acetyl degradation route) and via the 2-methylcitrate cycle I (propionate degradation route). Catalyzes the Claisen condensation of propionyl-CoA and oxaloacetate (OAA) to yield 2-methylcitrate (2-MC) and CoA. Also catalyzes the condensation of oxaloacetate with acetyl-CoA but with a lower specificity. This is 2-methylcitrate synthase (gltA) from Antarctic bacterium DS2-3R.